The chain runs to 658 residues: UvrABC system protein B (658 aa).

The region spanning 25–182 (DSIRSGNKFN…LKLVDMGYKR (158 aa)) is the Helicase ATP-binding domain. An ATP-binding site is contributed by 38–45 (GVTGSGKT). The Beta-hairpin motif lies at 91-114 (YYDYYQPEAYIPRQDLFIEKDSSI). Residues 433 to 596 (QVEVLFDRAK…TPRSASRNLE (164 aa)) form the Helicase C-terminal domain. One can recognise a UVR domain in the interval 623–658 (AKIVKELRKQMLEAAKNLEFEKAAALRDEIAKLREL).

Belongs to the UvrB family. As to quaternary structure, forms a heterotetramer with UvrA during the search for lesions. Interacts with UvrC in an incision complex.

It localises to the cytoplasm. Functionally, the UvrABC repair system catalyzes the recognition and processing of DNA lesions. A damage recognition complex composed of 2 UvrA and 2 UvrB subunits scans DNA for abnormalities. Upon binding of the UvrA(2)B(2) complex to a putative damaged site, the DNA wraps around one UvrB monomer. DNA wrap is dependent on ATP binding by UvrB and probably causes local melting of the DNA helix, facilitating insertion of UvrB beta-hairpin between the DNA strands. Then UvrB probes one DNA strand for the presence of a lesion. If a lesion is found the UvrA subunits dissociate and the UvrB-DNA preincision complex is formed. This complex is subsequently bound by UvrC and the second UvrB is released. If no lesion is found, the DNA wraps around the other UvrB subunit that will check the other stand for damage. In Campylobacter fetus subsp. fetus (strain 82-40), this protein is UvrABC system protein B.